We begin with the raw amino-acid sequence, 347 residues long: Tetraacyldisaccharide 4'-kinase (347 aa).

ATP is bound at residue 65-72 (FVGGTGKT).

Belongs to the LpxK family.

It carries out the reaction a lipid A disaccharide + ATP = a lipid IVA + ADP + H(+). The protein operates within glycolipid biosynthesis; lipid IV(A) biosynthesis; lipid IV(A) from (3R)-3-hydroxytetradecanoyl-[acyl-carrier-protein] and UDP-N-acetyl-alpha-D-glucosamine: step 6/6. Functionally, transfers the gamma-phosphate of ATP to the 4'-position of a tetraacyldisaccharide 1-phosphate intermediate (termed DS-1-P) to form tetraacyldisaccharide 1,4'-bis-phosphate (lipid IVA). The sequence is that of Tetraacyldisaccharide 4'-kinase from Janthinobacterium sp. (strain Marseille) (Minibacterium massiliensis).